The chain runs to 358 residues: Polyadenylate-binding protein-interacting protein 11 (358 aa).

The segment covering 1-19 (MAVVETGAAATAADAGGVV) has biased composition (low complexity). The interval 1–45 (MAVVETGAAATAADAGGVVIQPPPSSPPSSMTSQDSGVSSDDQNH) is disordered. Polar residues predominate over residues 31-41 (MTSQDSGVSSD). Residues 92-102 (KLNPMAEEFVP) carry the PAM2-like motif. The interval 136-164 (GGYGNENGGFRRKKSFGQGKRRMNARTSM) is disordered. A compositionally biased stretch (basic residues) spans 145–159 (FRRKKSFGQGKRRMN). The Bipartite nuclear localization signal signature appears at 146-157 (RRKKSFGQGKRR). 2 RRM domains span residues 173 to 248 (RTVY…PSKT) and 270 to 346 (RTIY…PSKT).

As to expression, expressed in cauline leaves, stems, immature siliques and primary inflorescences.

The protein localises to the nucleus. This is Polyadenylate-binding protein-interacting protein 11 (CID11) from Arabidopsis thaliana (Mouse-ear cress).